The following is a 310-amino-acid chain: Methionyl-tRNA formyltransferase (310 aa).

110 to 113 (SLLP) is a binding site for (6S)-5,6,7,8-tetrahydrofolate.

It belongs to the Fmt family.

The enzyme catalyses L-methionyl-tRNA(fMet) + (6R)-10-formyltetrahydrofolate = N-formyl-L-methionyl-tRNA(fMet) + (6S)-5,6,7,8-tetrahydrofolate + H(+). Its function is as follows. Attaches a formyl group to the free amino group of methionyl-tRNA(fMet). The formyl group appears to play a dual role in the initiator identity of N-formylmethionyl-tRNA by promoting its recognition by IF2 and preventing the misappropriation of this tRNA by the elongation apparatus. The chain is Methionyl-tRNA formyltransferase from Streptomyces coelicolor (strain ATCC BAA-471 / A3(2) / M145).